We begin with the raw amino-acid sequence, 341 residues long: Malate dehydrogenase, mitochondrial (341 aa).

NAD(+)-binding positions include 35–41 (GAAGGIG) and aspartate 61. Substrate is bound by residues arginine 108 and arginine 114. NAD(+) contacts are provided by residues asparagine 121 and 144-146 (ITN). The substrate site is built by asparagine 146 and arginine 180. Residue histidine 204 is the Proton acceptor of the active site. Methionine 255 contributes to the NAD(+) binding site.

It belongs to the LDH/MDH superfamily. MDH type 1 family. As to quaternary structure, homodimer.

The protein localises to the mitochondrion matrix. The catalysed reaction is (S)-malate + NAD(+) = oxaloacetate + NADH + H(+). Its function is as follows. Catalyzes the reversible conversion of (S)-malate to oxaloacetate in the citric acid cycle. In Caenorhabditis elegans, this protein is Malate dehydrogenase, mitochondrial.